The sequence spans 281 residues: Pantothenate synthetase (281 aa).

Residue M30–H37 coordinates ATP. H37 acts as the Proton donor in catalysis. Q64 contributes to the (R)-pantoate binding site. Q64 contacts beta-alanine. G150 to D153 serves as a coordination point for ATP. Q156 is a (R)-pantoate binding site. ATP-binding positions include V179 and Y187 to R190.

This sequence belongs to the pantothenate synthetase family. Homodimer.

The protein resides in the cytoplasm. It catalyses the reaction (R)-pantoate + beta-alanine + ATP = (R)-pantothenate + AMP + diphosphate + H(+). It participates in cofactor biosynthesis; (R)-pantothenate biosynthesis; (R)-pantothenate from (R)-pantoate and beta-alanine: step 1/1. Its function is as follows. Catalyzes the condensation of pantoate with beta-alanine in an ATP-dependent reaction via a pantoyl-adenylate intermediate. In Akkermansia muciniphila (strain ATCC BAA-835 / DSM 22959 / JCM 33894 / BCRC 81048 / CCUG 64013 / CIP 107961 / Muc), this protein is Pantothenate synthetase.